The sequence spans 910 residues: Protein translocase subunit SecA (910 aa).

Residues Gln86, 104–108 (GEGKT), and Asp499 contribute to the ATP site. Residues Cys894, Cys896, Cys905, and His906 each coordinate Zn(2+).

Belongs to the SecA family. In terms of assembly, monomer and homodimer. Part of the essential Sec protein translocation apparatus which comprises SecA, SecYEG and auxiliary proteins SecDF-YajC and YidC. Zn(2+) serves as cofactor.

The protein localises to the cell inner membrane. It is found in the cytoplasm. It catalyses the reaction ATP + H2O + cellular proteinSide 1 = ADP + phosphate + cellular proteinSide 2.. Functionally, part of the Sec protein translocase complex. Interacts with the SecYEG preprotein conducting channel. Has a central role in coupling the hydrolysis of ATP to the transfer of proteins into and across the cell membrane, serving both as a receptor for the preprotein-SecB complex and as an ATP-driven molecular motor driving the stepwise translocation of polypeptide chains across the membrane. The protein is Protein translocase subunit SecA of Rickettsia bellii (strain RML369-C).